The sequence spans 238 residues: Small ribosomal subunit protein eS4 (238 aa).

The S4 RNA-binding domain maps to 38–100; that stretch reads LPLAIVIRDV…TGEVYRVVPD (63 aa).

It belongs to the eukaryotic ribosomal protein eS4 family.

In Pyrobaculum arsenaticum (strain DSM 13514 / JCM 11321 / PZ6), this protein is Small ribosomal subunit protein eS4.